A 94-amino-acid chain; its full sequence is Large ribosomal subunit protein bL25 (94 aa).

Belongs to the bacterial ribosomal protein bL25 family. As to quaternary structure, part of the 50S ribosomal subunit; part of the 5S rRNA/L5/L18/L25 subcomplex. Contacts the 5S rRNA. Binds to the 5S rRNA independently of L5 and L18.

This is one of the proteins that binds to the 5S RNA in the ribosome where it forms part of the central protuberance. In Salmonella arizonae (strain ATCC BAA-731 / CDC346-86 / RSK2980), this protein is Large ribosomal subunit protein bL25.